Consider the following 374-residue polypeptide: Dual-specificity RNA methyltransferase RlmN (374 aa).

Catalysis depends on E91, which acts as the Proton acceptor. Positions 97–340 constitute a Radical SAM core domain; that stretch reads EDDRGTLCVS…TTVRKTRGDD (244 aa). C104 and C345 are disulfide-bonded. [4Fe-4S] cluster is bound by residues C111, C115, and C118. Residues 166–167, S198, 220–222, and N302 contribute to the S-adenosyl-L-methionine site; these read GE and SLH. Residue C345 is the S-methylcysteine intermediate of the active site.

It belongs to the radical SAM superfamily. RlmN family. [4Fe-4S] cluster serves as cofactor.

It is found in the cytoplasm. The enzyme catalyses adenosine(2503) in 23S rRNA + 2 reduced [2Fe-2S]-[ferredoxin] + 2 S-adenosyl-L-methionine = 2-methyladenosine(2503) in 23S rRNA + 5'-deoxyadenosine + L-methionine + 2 oxidized [2Fe-2S]-[ferredoxin] + S-adenosyl-L-homocysteine. It carries out the reaction adenosine(37) in tRNA + 2 reduced [2Fe-2S]-[ferredoxin] + 2 S-adenosyl-L-methionine = 2-methyladenosine(37) in tRNA + 5'-deoxyadenosine + L-methionine + 2 oxidized [2Fe-2S]-[ferredoxin] + S-adenosyl-L-homocysteine. Its function is as follows. Specifically methylates position 2 of adenine 2503 in 23S rRNA and position 2 of adenine 37 in tRNAs. m2A2503 modification seems to play a crucial role in the proofreading step occurring at the peptidyl transferase center and thus would serve to optimize ribosomal fidelity. The protein is Dual-specificity RNA methyltransferase RlmN of Delftia acidovorans (strain DSM 14801 / SPH-1).